We begin with the raw amino-acid sequence, 408 residues long: Heparan-sulfate 6-O-sulfotransferase 1 (408 aa).

At 8–14 the chain is on the cytoplasmic side; the sequence is MVERTSK. Residues 15-35 form a helical; Signal-anchor for type II membrane protein membrane-spanning segment; that stretch reads FLLIVAASVCFMLILYQYVGP. Residues 36–408 lie on the Lumenal side of the membrane; it reads GLSLGAPSGR…DYMSHIIEKW (373 aa). 90 to 98 provides a ligand contact to 3'-phosphoadenylyl sulfate; the sequence is HIQKTGGTT. Substrate contacts are provided by residues 120–121, arginine 137, tryptophan 142, and histidine 147; that span reads KK. Histidine 147 serves as the catalytic Proton acceptor. Residues arginine 182 and serine 190 each contribute to the 3'-phosphoadenylyl sulfate site. Substrate-binding residues include histidine 194 and tryptophan 201. N-linked (GlcNAc...) asparagine glycosylation is present at asparagine 261. 314–316 is a binding site for 3'-phosphoadenylyl sulfate; sequence MQY. Asparagine 317 carries N-linked (GlcNAc...) asparagine glycosylation. Residue 320-321 participates in 3'-phosphoadenylyl sulfate binding; sequence RA. Asparagine 328 carries N-linked (GlcNAc...) asparagine glycosylation. A coiled-coil region spans residues 348 to 382; sequence AKDLFQQRYQYKRQLERMEQRIKNREERLLHRSNE. Residues 376-396 form a disordered region; that stretch reads LLHRSNEALPKEETEEQGRLP.

It belongs to the sulfotransferase 6 family. In terms of processing, N-glycosylated.

The protein resides in the membrane. The enzyme catalyses alpha-D-glucosaminyl-[heparan sulfate](n) + 3'-phosphoadenylyl sulfate = 6-sulfo-alpha-D-glucosaminyl-[heparan sulfate](n) + adenosine 3',5'-bisphosphate + H(+). 6-O-sulfation enzyme which catalyzes the transfer of sulfate from 3'-phosphoadenosine 5'-phosphosulfate (PAPS) to position 6 of the N-sulfoglucosamine residue (GlcNS) of heparan sulfate. May also play a role in limb development. The chain is Heparan-sulfate 6-O-sulfotransferase 1 from Gallus gallus (Chicken).